The primary structure comprises 275 residues: Elongation factor Ts (275 aa).

The segment at 76-79 (TDFV) is involved in Mg(2+) ion dislocation from EF-Tu.

Belongs to the EF-Ts family.

The protein localises to the cytoplasm. In terms of biological role, associates with the EF-Tu.GDP complex and induces the exchange of GDP to GTP. It remains bound to the aminoacyl-tRNA.EF-Tu.GTP complex up to the GTP hydrolysis stage on the ribosome. In Nocardia farcinica (strain IFM 10152), this protein is Elongation factor Ts.